Consider the following 295-residue polypeptide: MSSYGRTRTDLKKHKLAPKKRFGQNFLVHKQTAEAIVRAGEVGEDDIITEIGVGLGALTVPMAHQAKHVYGIEIDNGIIKYHEEEQDLPDNVTLIHQDVLKVGFGDLAEKCGGKLKILANLPYSISHPLIFKLIEHRDIIPTATIMLQEEVADRLLAKPGTKEYGIPTILLGCCASIKKKMVLKPAEFHPRPKIDSAVITVDFTKPPELPEYNKELLSRVVRSAFSQRRKTILNTLSSASFFFAEKENKAKNKAMTEKTIEKAGFAVSLRPEVLSIQDFVRLTTVFEQEMNRTEE.

The S-adenosyl-L-methionine site is built by asparagine 25, leucine 27, glycine 52, glutamate 73, aspartate 98, and asparagine 120.

The protein belongs to the class I-like SAM-binding methyltransferase superfamily. rRNA adenine N(6)-methyltransferase family. RsmA subfamily.

The protein localises to the cytoplasm. The enzyme catalyses adenosine(1518)/adenosine(1519) in 16S rRNA + 4 S-adenosyl-L-methionine = N(6)-dimethyladenosine(1518)/N(6)-dimethyladenosine(1519) in 16S rRNA + 4 S-adenosyl-L-homocysteine + 4 H(+). Its function is as follows. Specifically dimethylates two adjacent adenosines (A1518 and A1519) in the loop of a conserved hairpin near the 3'-end of 16S rRNA in the 30S particle. May play a critical role in biogenesis of 30S subunits. The chain is Ribosomal RNA small subunit methyltransferase A from Desulfotalea psychrophila (strain LSv54 / DSM 12343).